We begin with the raw amino-acid sequence, 110 residues long: UPF0122 protein STER_0914 (110 aa).

The protein belongs to the UPF0122 family.

In terms of biological role, might take part in the signal recognition particle (SRP) pathway. This is inferred from the conservation of its genetic proximity to ftsY/ffh. May be a regulatory protein. The polypeptide is UPF0122 protein STER_0914 (Streptococcus thermophilus (strain ATCC BAA-491 / LMD-9)).